The following is a 569-amino-acid chain: Tetratricopeptide repeat protein 22 (569 aa).

TPR repeat units lie at residues 66–99, 101–133, 203–237, 260–294, 295–328, 383–418, and 432–465; these read PAVRHLLGAFAFYLEELDEARECFLEVAHEHPGN, NAWANLAHVYGRLGQEEEEEACAARLADLMGLA, ATLYIRLDGIFLELGSEEQKRLPAFNRTLALLRQV, KDTFSTTPMGVHDCGYSGTDPLDCFGKAIEIAKNQ, PPILNRLAKIFYFLGKQDMAIGTCNMALDVLRDP, FKAYLDIGQVYYYMGVDAVQELLAVDEAALNQALVF, and PELQLLRGKCLRIKGEDANAAACFKRAVELDDAG.

The chain is Tetratricopeptide repeat protein 22 (TTC22) from Homo sapiens (Human).